The following is a 1390-amino-acid chain: Nuclear pore complex protein 14 (1390 aa).

Polar residues-rich tracts occupy residues 434–455 (SQKPISAPPSDQTPVTKPSTVF) and 464–521 (LKSS…STPK). 3 disordered regions span residues 434-530 (SQKP…KISD), 851-874 (PSSSLFSASPSTPSTKSDAATQAD), and 985-1118 (QEIE…SKAA). The segment covering 851 to 864 (PSSSLFSASPSTPS) has biased composition (low complexity). The span at 986 to 1033 (EIEKASSKVETLNKTEEVKDEKSENEVTPDLKSEEPKSLETKVKEEPK) shows a compositional bias: basic and acidic residues. Residues 1051–1071 (KTPSFSFNSTTTPKSTSSTSS) show a composition bias toward low complexity. Repeat 1 spans residues 1073 to 1074 (FG). Residues 1073 to 1373 (FGGGLKTQTP…TPAPTSSVFG (301 aa)) form a 17 X 2 AA repeats of F-G region. Polar residues predominate over residues 1078–1090 (KTQTPSSSNSTNI). The stretch at 1091–1092 (FG) is repeat 2. A compositionally biased stretch (low complexity) spans 1095–1109 (TTTTATPTPASNTSS). Repeat copies occupy residues 1111-1112 (FG), 1122-1123 (FG), 1125-1126 (FG), 1163-1164 (FG), 1166-1167 (FG), and 1178-1179 (FG). The disordered stretch occupies residues 1183 to 1280 (TAPTVPNVDD…QASAPATGTS (98 aa)). A compositionally biased stretch (gly residues) spans 1201–1210 (NGGGSGGFMS). Over residues 1231–1243 (TSTGTSASSSSWL) the composition is skewed to low complexity. Copy 9 of the repeat occupies 1244–1245 (FG). Over residues 1264–1280 (TAGSSAQQASAPATGTS) the composition is skewed to low complexity. 8 consecutive repeat copies span residues 1283–1284 (FG), 1289–1290 (FG), 1295–1296 (FG), 1300–1301 (FG), 1315–1316 (FG), 1344–1345 (FG), 1357–1358 (FG), and 1372–1373 (FG). Over residues 1342 to 1371 (SLFGGGATPQTNTSIFGGGANTTPAPTSSV) the composition is skewed to polar residues. Residues 1342-1390 (SLFGGGATPQTNTSIFGGGANTTPAPTSSVFGGGASANANKPTSFTSWR) form a disordered region. Over residues 1378–1390 (ANANKPTSFTSWR) the composition is skewed to polar residues.

In terms of assembly, interacts with caspase ced-3 (via propeptide); the interaction tethers ced-3 to the nuclear membrane and prevents its autoprocessing in absence of ced-4.

The protein resides in the nucleus. It is found in the nuclear pore complex. The protein localises to the nucleus membrane. May serve as a docking site in the receptor-mediated import of substrates across the nuclear pore complex. Plays a role in apoptosis by tethering caspase ced-3 to the nuclear membrane preventing its autoprocessing in absence of ced-4. The protein is Nuclear pore complex protein 14 of Caenorhabditis elegans.